The chain runs to 116 residues: Somatostatin (116 aa).

An N-terminal signal peptide occupies residues 1–24 (MLSCRLQCALAALSIVLALGGVTG). Positions 25–88 (APSDPRLRQF…QDEMRLELQR (64 aa)) are excised as a propeptide. An Alanine amide modification is found at A43. Residues 62–99 (QTENDALEPEDLSQAAEQDEMRLELQRSANSNPAMAPR) are disordered. The cysteines at positions 105 and 116 are disulfide-linked.

The protein belongs to the somatostatin family. C-terminal amidation of the neuronostatin peptide is required for its biological activity, including for the regulation of mean arterial pressure. Expressed in the pancreas and the spleen (at protein level).

Its subcellular location is the secreted. Its function is as follows. Inhibits the secretion of pituitary hormones, including that of growth hormone/somatotropin (GH1), PRL, ACTH, luteinizing hormone (LH) and TSH. Also impairs ghrelin- and GnRH-stimulated secretion of GH1 and LH; the inhibition of ghrelin-stimulated secretion of GH1 can be further increased by neuronostatin. In terms of biological role, may enhance low-glucose-induced glucagon release by pancreatic alpha cells. This effect may be mediated by binding to GPR107 and PKA activation. May regulate cardiac contractile function. May compromise cardiomyocyte viability. In the central nervous system, may impair memory retention and may affect hippocampal excitability. May also have anxiolytic and anorexigenic effects. May play a role in arterial pressure regulation. May inhibit basal, but not ghrelin- or GnRH-stimulated secretion of GH1 or LH, but does not affect the release of other pituitary hormones, including PRL, ACTH, FSH or TSH. Potentiates inhibitory action of somatostatin on ghrelin-stimulated secretion of GH1, but not that on GnRH-stimulated secretion of LH. In Sus scrofa (Pig), this protein is Somatostatin (SST).